The primary structure comprises 191 residues: Protein Ves (191 aa).

Belongs to the Ves family.

This chain is Protein Ves, found in Escherichia coli O139:H28 (strain E24377A / ETEC).